Reading from the N-terminus, the 254-residue chain is Dihydroorotate dehydrogenase B (NAD(+)), electron transfer subunit (254 aa).

One can recognise an FAD-binding FR-type domain in the interval 1–99; the sequence is MLQTEMKVIQ…LGPLGKGFDI (99 aa). Residues 50–53, 67–69, and 74–75 contribute to the FAD site; these read RPIS, LYR, and GT. [2Fe-2S] cluster is bound by residues Cys218, Cys223, Cys226, and Cys241.

This sequence belongs to the PyrK family. In terms of assembly, heterotetramer of 2 PyrK and 2 PyrD type B subunits. [2Fe-2S] cluster serves as cofactor. Requires FAD as cofactor.

It participates in pyrimidine metabolism; UMP biosynthesis via de novo pathway; orotate from (S)-dihydroorotate (NAD(+) route): step 1/1. Its function is as follows. Responsible for channeling the electrons from the oxidation of dihydroorotate from the FMN redox center in the PyrD type B subunit to the ultimate electron acceptor NAD(+). The sequence is that of Dihydroorotate dehydrogenase B (NAD(+)), electron transfer subunit from Listeria monocytogenes serotype 4a (strain HCC23).